The chain runs to 178 residues: Adenine phosphoribosyltransferase (178 aa).

It belongs to the purine/pyrimidine phosphoribosyltransferase family. As to quaternary structure, homodimer.

It is found in the cytoplasm. The catalysed reaction is AMP + diphosphate = 5-phospho-alpha-D-ribose 1-diphosphate + adenine. The protein operates within purine metabolism; AMP biosynthesis via salvage pathway; AMP from adenine: step 1/1. Its function is as follows. Catalyzes a salvage reaction resulting in the formation of AMP, that is energically less costly than de novo synthesis. The sequence is that of Adenine phosphoribosyltransferase from Novosphingobium aromaticivorans (strain ATCC 700278 / DSM 12444 / CCUG 56034 / CIP 105152 / NBRC 16084 / F199).